The primary structure comprises 2555 residues: Ubiquitin carboxyl-terminal hydrolase 9Y (2555 aa).

Residues 1 to 66 (MTAITHGSPV…APPQHEDEEP (66 aa)) are disordered. Residues 13–45 (NDSQGQVLDGQSQHLFQQNQTSSPDSSNENSVA) show a composition bias toward polar residues. Serine 589 is subject to Phosphoserine. Threonine 591 is subject to Phosphothreonine. The disordered stretch occupies residues 972 to 997 (NMPSSPDSSSDSSTASPGNHRNHYND). Over residues 974-984 (PSSPDSSSDSS) the composition is skewed to low complexity. The USP domain occupies 1559–1958 (VGLKNAGATC…NAYILFYEQM (400 aa)). The Nucleophile role is filled by cysteine 1568. Zn(2+) contacts are provided by cysteine 1729, histidine 1731, cysteine 1773, and cysteine 1776. Histidine 1881 (proton acceptor) is an active-site residue. At serine 2444 the chain carries Phosphoserine. Positions 2476-2485 (PEEEPDDQDA) are enriched in acidic residues. Residues 2476 to 2555 (PEEEPDDQDA…EVSSPQMKDQ (80 aa)) are disordered. 2 stretches are compositionally biased toward polar residues: residues 2504-2514 (PASQYQQNNHV) and 2528-2555 (NNPQKTGQRTQENYEGNEEVSSPQMKDQ). The residue at position 2541 (tyrosine 2541) is a Phosphotyrosine. Phosphoserine is present on serine 2548.

This sequence belongs to the peptidase C19 family. Widely expressed in embryonic and adult tissues.

The enzyme catalyses Thiol-dependent hydrolysis of ester, thioester, amide, peptide and isopeptide bonds formed by the C-terminal Gly of ubiquitin (a 76-residue protein attached to proteins as an intracellular targeting signal).. Its pathway is protein modification; protein ubiquitination. Deubiquitinase that mediates deubiquitination of target proteins. May stabilize target proteins that are important for male germ cell development. This is Ubiquitin carboxyl-terminal hydrolase 9Y from Homo sapiens (Human).